The chain runs to 97 residues: Small ribosomal subunit protein bS6 (97 aa).

This sequence belongs to the bacterial ribosomal protein bS6 family.

Binds together with bS18 to 16S ribosomal RNA. The sequence is that of Small ribosomal subunit protein bS6 from Bifidobacterium longum (strain NCC 2705).